The sequence spans 110 residues: Multidrug transporter EmrE (110 aa).

The next 4 membrane-spanning stretches (helical) occupy residues 4 to 21 (YIYL…TTLM), 34 to 52 (VGTI…QTLA), 58 to 80 (IAYA…GFFG), and 87 to 104 (AIIG…INLL).

It belongs to the drug/metabolite transporter (DMT) superfamily. Small multidrug resistance (SMR) (TC 2.A.7.1) family. As to quaternary structure, homodimer. Forms an antiparallel dimeric structure. Also forms dimers of homodimers.

It is found in the cell inner membrane. Substrate identity influences both the ground-state and transition-state energies for the conformational exchange process, emphasizing the coupling between substrate binding and transport. Functionally, multidrug efflux protein that confers resistance to a wide range of toxic compounds, including ethidium, methyl viologen, acriflavine, tetraphenylphosphonium (TPP(+)), benzalkonium, propidium, dequalinium and the aminoglycoside antibiotics streptomycin and tobramycin. Can also transport the osmoprotectants betaine and choline. The drug efflux is coupled to an influx of protons. Can couple antiport of a drug to either one or two protons, performing both electrogenic and electroneutral transport of a single substrate. Simultaneously binds and cotransports proton and drug. The polypeptide is Multidrug transporter EmrE (emrE) (Escherichia coli (strain K12)).